The following is an 846-amino-acid chain: ATR-interacting protein mus304 (846 aa).

Disordered stretches follow at residues 20 to 40 (DVSV…FDGI), 90 to 109 (QGST…QKKP), and 135 to 162 (EPQK…KTTT). A compositionally biased stretch (low complexity) spans 144–162 (TSTSRITTSSISVQQKTTT). Coiled-coil stretches lie at residues 168–240 (ATQS…LADE) and 327–359 (EYSE…LQAK). The EEXXXDL motif signature appears at 504–510 (EELLFDL). The segment at 651 to 681 (GAVQGSVSNGSTSASVSNPNQNSNSSTTQRG) is disordered. The span at 655–676 (GSVSNGSTSASVSNPNQNSNSS) shows a compositional bias: low complexity.

Belongs to the ATRIP family. In terms of assembly, interacts with ATR/mei-41. In terms of tissue distribution, highly expressed in the oocyte and nurse cells from stage 5 onward and in embryos prior to during nuclear division 14. Then, it decreases to background levels during interphase 14. Weakly or not expressed in stage embryos and imaginal disks.

It localises to the cytoplasm. Its function is as follows. DNA damage checkpoint protein required for chromosome break repair and for genomic stability during development. This chain is ATR-interacting protein mus304 (mus304), found in Drosophila melanogaster (Fruit fly).